A 208-amino-acid chain; its full sequence is Uracil phosphoribosyltransferase (208 aa).

Residues R78, R103, and D130–S138 contribute to the 5-phospho-alpha-D-ribose 1-diphosphate site. Uracil contacts are provided by residues I193 and G198–A200. D199 lines the 5-phospho-alpha-D-ribose 1-diphosphate pocket.

This sequence belongs to the UPRTase family. The cofactor is Mg(2+).

The catalysed reaction is UMP + diphosphate = 5-phospho-alpha-D-ribose 1-diphosphate + uracil. It functions in the pathway pyrimidine metabolism; UMP biosynthesis via salvage pathway; UMP from uracil: step 1/1. Its activity is regulated as follows. Allosterically activated by GTP. Its function is as follows. Catalyzes the conversion of uracil and 5-phospho-alpha-D-ribose 1-diphosphate (PRPP) to UMP and diphosphate. In Blochmanniella pennsylvanica (strain BPEN), this protein is Uracil phosphoribosyltransferase.